A 292-amino-acid polypeptide reads, in one-letter code: MAKSCTLVLLLVALVGLSLLVSPIACSRKLSKPKPKPKPSMKKPVVRAHNNYTGSPSVTVTTGWAAAGATYYGAPNGDGSDGGACGYQTAVGQRPFSSMIAAGSPSLYKGGKGCGACYEVKCTTNAACSGQPATVVITDECPGGICLAGAAHFDMSGTSMGAMAKPGMADKLRAAGILQVQYRRVPCKYSGVNIAFRVDQGANPFYFEVLIEFEDGDGDLNAVDLMEAGCGWTPMVQNWGALWRYNSNTGKALKAPFSLRLTSDSGKVLVANNVIPASWKPGVTYRSLVNYS.

A signal peptide spans 1–27; it reads MAKSCTLVLLLVALVGLSLLVSPIACS. Asn51 is a glycosylation site (N-linked (GlcNAc...) asparagine). The 111-residue stretch at 82–192 folds into the Expansin-like EG45 domain; sequence GGACGYQTAV…RRVPCKYSGV (111 aa). Disulfide bonds link Cys85/Cys114, Cys117/Cys187, and Cys122/Cys128. Residues 205–287 form the Expansin-like CBD domain; sequence FYFEVLIEFE…SWKPGVTYRS (83 aa).

The protein belongs to the expansin family. Expansin B subfamily. In terms of tissue distribution, expressed in internodes.

It is found in the secreted. It localises to the cell wall. The protein localises to the membrane. May cause loosening and extension of plant cell walls by disrupting non-covalent bonding between cellulose microfibrils and matrix glucans. No enzymatic activity has been found. May be required for rapid internodal elongation in deepwater rice during submergence. The protein is Expansin-B11 (EXPB11) of Oryza sativa subsp. japonica (Rice).